Consider the following 290-residue polypeptide: Acetylglutamate kinase (290 aa).

Substrate-binding positions include 60–61 (GG), Arg-82, and Asn-185.

It belongs to the acetylglutamate kinase family. ArgB subfamily.

It is found in the cytoplasm. It carries out the reaction N-acetyl-L-glutamate + ATP = N-acetyl-L-glutamyl 5-phosphate + ADP. It participates in amino-acid biosynthesis; L-arginine biosynthesis; N(2)-acetyl-L-ornithine from L-glutamate: step 2/4. Its function is as follows. Catalyzes the ATP-dependent phosphorylation of N-acetyl-L-glutamate. This Archaeoglobus fulgidus (strain ATCC 49558 / DSM 4304 / JCM 9628 / NBRC 100126 / VC-16) protein is Acetylglutamate kinase.